Reading from the N-terminus, the 326-residue chain is tRNA-modifying protein YgfZ (326 aa).

Residues Trp-27 and Trp-189 each coordinate folate.

This sequence belongs to the tRNA-modifying YgfZ family.

The protein resides in the cytoplasm. Folate-binding protein involved in regulating the level of ATP-DnaA and in the modification of some tRNAs. It is probably a key factor in regulatory networks that act via tRNA modification, such as initiation of chromosomal replication. This Escherichia coli O127:H6 (strain E2348/69 / EPEC) protein is tRNA-modifying protein YgfZ.